A 690-amino-acid polypeptide reads, in one-letter code: Potassium-transporting ATPase ATP-binding subunit (690 aa).

Residues 1–23 (MNSTSTVRQPGGPRQQRRHTPKA) form a disordered region. 4 helical membrane-spanning segments follow: residues 44-64 (IMVK…TGML), 78-98 (AMFN…ANFA), 233-253 (IALT…VATL), and 268-288 (LLIA…LSAI). Asp-321 functions as the 4-aspartylphosphate intermediate in the catalytic mechanism. ATP is bound by residues Asp-358, Glu-362, 389–396 (FSARTRMS), and Lys-408. Mg(2+) is bound by residues Asp-531 and Asp-535. 3 helical membrane-spanning segments follow: residues 601-621 (FAII…IMDL), 627-647 (AVLS…PLAL), and 665-685 (ILVY…LIDL).

Belongs to the cation transport ATPase (P-type) (TC 3.A.3) family. Type IA subfamily. As to quaternary structure, the system is composed of three essential subunits: KdpA, KdpB and KdpC.

The protein resides in the cell inner membrane. The catalysed reaction is K(+)(out) + ATP + H2O = K(+)(in) + ADP + phosphate + H(+). Part of the high-affinity ATP-driven potassium transport (or Kdp) system, which catalyzes the hydrolysis of ATP coupled with the electrogenic transport of potassium into the cytoplasm. This subunit is responsible for energy coupling to the transport system and for the release of the potassium ions to the cytoplasm. This is Potassium-transporting ATPase ATP-binding subunit from Synechocystis sp. (strain ATCC 27184 / PCC 6803 / Kazusa).